The following is a 354-amino-acid chain: Probable DNA repair protein RAD51 homolog 4 (354 aa).

115–122 (GNTSCGKT) provides a ligand contact to ATP.

This sequence belongs to the RecA family. RAD51 subfamily.

Its subcellular location is the nucleus. Functionally, involved in the homologous recombination repair (HRR) pathway of double-stranded DNA breaks arising during DNA replication or induced by DNA-damaging agents. In Dictyostelium discoideum (Social amoeba), this protein is Probable DNA repair protein RAD51 homolog 4 (rad51d).